The following is a 432-amino-acid chain: Monoacylglycerol lipase ABHD2 (432 aa).

Residues 1-14 (MNTHESEVYTVAPE) are Cytoplasmic-facing. A helical; Signal-anchor for type II membrane protein transmembrane segment spans residues 15 to 35 (MPAMFDGMKLAAVATVLYVIV). The Extracellular segment spans residues 36 to 432 (RCLNLKSPTA…NQTTCQENTS (397 aa)). Residues 132 to 383 (TMVICPGIGN…HGGHLGFFEG (252 aa)) enclose the AB hydrolase-1 domain. Asn-141 carries N-linked (GlcNAc...) asparagine glycosylation. The Nucleophile role is filled by Ser-212. A glycan (N-linked (GlcNAc...) asparagine) is linked at Asn-225. Residues Asp-346 and His-377 each act as charge relay system in the active site. The tract at residues 413–432 (PPCQSKDAQSNQTTCQENTS) is disordered. Positions 418 to 432 (KDAQSNQTTCQENTS) are enriched in polar residues. N-linked (GlcNAc...) asparagine glycosylation occurs at Asn-423.

Belongs to the AB hydrolase superfamily. AB hydrolase 4 family.

It is found in the cell membrane. It catalyses the reaction Hydrolyzes glycerol monoesters of long-chain fatty acids.. It carries out the reaction an acetyl ester + H2O = an aliphatic alcohol + acetate + H(+). The enzyme catalyses a triacylglycerol + H2O = a diacylglycerol + a fatty acid + H(+). The catalysed reaction is 2-(5Z,8Z,11Z,14Z-eicosatetraenoyl)-glycerol + H2O = glycerol + (5Z,8Z,11Z,14Z)-eicosatetraenoate + H(+). It catalyses the reaction a butanoate ester + H2O = an aliphatic alcohol + butanoate + H(+). It carries out the reaction hexadecanoate ester + H2O = an aliphatic alcohol + hexadecanoate + H(+). Acylglycerol lipase activity is activated upon binding to progesterone. Progesterone-dependent acylglycerol lipase that catalyzes hydrolysis of endocannabinoid arachidonoylglycerol (AG) from cell membrane. Acts as a progesterone receptor: progesterone-binding activates the acylglycerol lipase activity, mediating degradation of 1-arachidonoylglycerol (1AG) and 2-arachidonoylglycerol (2AG) to glycerol and arachidonic acid (AA). Also displays an ester hydrolase activity against acetyl ester, butanoate ester and hexadecanoate ester. Plays a key role in sperm capacitation in response to progesterone by mediating degradation of 2AG, an inhibitor of the sperm calcium channel CatSper, leading to calcium influx via CatSper and sperm activation. May also play a role in smooth muscle cells migration. The polypeptide is Monoacylglycerol lipase ABHD2 (abhd2a) (Danio rerio (Zebrafish)).